A 361-amino-acid polypeptide reads, in one-letter code: Peptide chain release factor 1 (361 aa).

At Gln-235 the chain carries N5-methylglutamine.

This sequence belongs to the prokaryotic/mitochondrial release factor family. In terms of processing, methylated by PrmC. Methylation increases the termination efficiency of RF1.

It localises to the cytoplasm. In terms of biological role, peptide chain release factor 1 directs the termination of translation in response to the peptide chain termination codons UAG and UAA. This chain is Peptide chain release factor 1, found in Azoarcus sp. (strain BH72).